We begin with the raw amino-acid sequence, 486 residues long: Ribulose bisphosphate carboxylase large chain (486 aa).

Asparagine 126 and threonine 176 together coordinate substrate. The active-site Proton acceptor is the lysine 178. Position 180 (lysine 180) interacts with substrate. Residues lysine 204, aspartate 206, and glutamate 207 each contribute to the Mg(2+) site. N6-carboxylysine is present on lysine 204. Catalysis depends on histidine 296, which acts as the Proton acceptor. 3 residues coordinate substrate: arginine 297, histidine 329, and serine 381.

This sequence belongs to the RuBisCO large chain family. Type I subfamily. As to quaternary structure, heterohexadecamer of 8 large chains and 8 small chains. Mg(2+) serves as cofactor.

It catalyses the reaction 2 (2R)-3-phosphoglycerate + 2 H(+) = D-ribulose 1,5-bisphosphate + CO2 + H2O. It carries out the reaction D-ribulose 1,5-bisphosphate + O2 = 2-phosphoglycolate + (2R)-3-phosphoglycerate + 2 H(+). Functionally, ruBisCO catalyzes two reactions: the carboxylation of D-ribulose 1,5-bisphosphate, the primary event in carbon dioxide fixation, as well as the oxidative fragmentation of the pentose substrate. Both reactions occur simultaneously and in competition at the same active site. This Rhizobium meliloti (strain 1021) (Ensifer meliloti) protein is Ribulose bisphosphate carboxylase large chain.